A 590-amino-acid chain; its full sequence is Cationic amino acid transporter 8, vacuolar (590 aa).

Residues 1 to 85 (MIPASMEEAH…ESENPMRRCL (85 aa)) lie on the Cytoplasmic side of the membrane. Residues 86 to 106 (TWWDLLWLSFGSVVGSGVFVI) form a helical membrane-spanning segment. The Vacuolar portion of the chain corresponds to 107–114 (TGQEARVG). A helical membrane pass occupies residues 115-135 (AGPAVVLSYAISGVSALLSVL). Residues 136–160 (CYAEFGVEIPVAGGSFSYLRVELGD) lie on the Cytoplasmic side of the membrane. The chain crosses the membrane as a helical span at residues 161–181 (FIAFIAAGNILLEAMVGAAGL). Over 182-209 (GRSWSSYLASLVKNDSDYFRIKVDSFAK) the chain is Vacuolar. Asn195 is a glycosylation site (N-linked (GlcNAc...) asparagine). Residues 210-230 (GFDLLDPVAVAVLLVANGIAM) form a helical membrane-spanning segment. Topologically, residues 231-238 (TGTKRTSW) are cytoplasmic. A helical membrane pass occupies residues 239 to 259 (LNLITSMVTVCIIVFIVVVGF). Residues 260–266 (THSKTSN) lie on the Vacuolar side of the membrane. Residues 267 to 287 (LVPFFPYGAKGVVQSAAVVYW) form a helical membrane-spanning segment. Residues 288–310 (SYTGFDMVANMAEETEKPSRDIP) lie on the Cytoplasmic side of the membrane. Residues 311 to 331 (IGLVGSMSMITVVYCLMALAL) traverse the membrane as a helical segment. The Vacuolar portion of the chain corresponds to 332–359 (TMMVKYTEIDANAAYSVAFAQIGMKWAK). Residues 360–380 (YLVGICALKGMTTSLLVGSLG) form a helical membrane-spanning segment. The Cytoplasmic portion of the chain corresponds to 381-407 (QARYTTQIARSHMIPPWFALVHPKTGT). A helical transmembrane segment spans residues 408–428 (PIYATLLVTILSSIISFFTSL). Residue Glu429 is a topological domain, vacuolar. The helical transmembrane segment at 430-450 (VLSSVFSFATLFIFMLVAVAL) threads the bilayer. Over 451-465 (LVRRYYVKDVTPEAG) the chain is Cytoplasmic. Residues 466 to 486 (LLKFLGFLFLIIASSIGVSAL) form a helical membrane-spanning segment. The Vacuolar portion of the chain corresponds to 487–493 (WNSGVKG). A helical membrane pass occupies residues 494-514 (WIAYTVTGVIWFIGTLGLALL). Residues 515–522 (PKYRVPKV) are Cytoplasmic-facing. A helical transmembrane segment spans residues 523–543 (WGVPLVPWLPSFSIAMNLFLI). Residues 544–553 (GSLGYVAFLR) are Vacuolar-facing. The chain crosses the membrane as a helical span at residues 554-574 (FIICTMVMLLYYLFVGLHATY). The Cytoplasmic segment spans residues 575-590 (DVAHQPLEEAKFEGER).

The protein belongs to the amino acid-polyamine-organocation (APC) superfamily. Cationic amino acid transporter (CAT) (TC 2.A.3.3) family. Expressed in roots, stems, flowers and leaves. Mostly present in young and rapidly dividing tissues such as the shoot and root apical meristem, and in young leaves and petioles during seedling development.

It localises to the cell membrane. Functionally, permease involved in the transport of the cationic neutral or acidic amino acids. The polypeptide is Cationic amino acid transporter 8, vacuolar (CAT8) (Arabidopsis thaliana (Mouse-ear cress)).